The chain runs to 152 residues: 6,7-dimethyl-8-ribityllumazine synthase (152 aa).

5-amino-6-(D-ribitylamino)uracil is bound by residues F22, 56 to 58 (AFE), and 79 to 81 (AVI). (2S)-2-hydroxy-3-oxobutyl phosphate is bound at residue 84–85 (AT). The Proton donor role is filled by H87. 5-amino-6-(D-ribitylamino)uracil is bound at residue F112. R126 lines the (2S)-2-hydroxy-3-oxobutyl phosphate pocket.

The protein belongs to the DMRL synthase family.

The enzyme catalyses (2S)-2-hydroxy-3-oxobutyl phosphate + 5-amino-6-(D-ribitylamino)uracil = 6,7-dimethyl-8-(1-D-ribityl)lumazine + phosphate + 2 H2O + H(+). It participates in cofactor biosynthesis; riboflavin biosynthesis; riboflavin from 2-hydroxy-3-oxobutyl phosphate and 5-amino-6-(D-ribitylamino)uracil: step 1/2. Catalyzes the formation of 6,7-dimethyl-8-ribityllumazine by condensation of 5-amino-6-(D-ribitylamino)uracil with 3,4-dihydroxy-2-butanone 4-phosphate. This is the penultimate step in the biosynthesis of riboflavin. The protein is 6,7-dimethyl-8-ribityllumazine synthase of Carboxydothermus hydrogenoformans (strain ATCC BAA-161 / DSM 6008 / Z-2901).